The primary structure comprises 534 residues: CTP synthase (534 aa).

Residues 1 to 266 are amidoligase domain; it reads MKQKFIFVTG…DELIVARLGL (266 aa). CTP is bound at residue Ser-14. Residue Ser-14 participates in UTP binding. Residues 15–20 and Asp-72 each bind ATP; that span reads SIGKGL. The Mg(2+) site is built by Asp-72 and Glu-140. CTP-binding positions include 147-149, 187-192, and Lys-223; these read DIE and KSKPTQ. UTP contacts are provided by residues 187–192 and Lys-223; that span reads KSKPTQ. In terms of domain architecture, Glutamine amidotransferase type-1 spans 291–534; sequence KIGVVGKYVD…HFVKASLKKK (244 aa). Residue Gly-353 participates in L-glutamine binding. The Nucleophile; for glutamine hydrolysis role is filled by Cys-380. L-glutamine contacts are provided by residues 381–384, Glu-404, and Arg-464; that span reads FGMQ. Active-site residues include His-509 and Glu-511.

It belongs to the CTP synthase family. In terms of assembly, homotetramer.

The catalysed reaction is UTP + L-glutamine + ATP + H2O = CTP + L-glutamate + ADP + phosphate + 2 H(+). It catalyses the reaction L-glutamine + H2O = L-glutamate + NH4(+). It carries out the reaction UTP + NH4(+) + ATP = CTP + ADP + phosphate + 2 H(+). It participates in pyrimidine metabolism; CTP biosynthesis via de novo pathway; CTP from UDP: step 2/2. With respect to regulation, allosterically activated by GTP, when glutamine is the substrate; GTP has no effect on the reaction when ammonia is the substrate. The allosteric effector GTP functions by stabilizing the protein conformation that binds the tetrahedral intermediate(s) formed during glutamine hydrolysis. Inhibited by the product CTP, via allosteric rather than competitive inhibition. Its function is as follows. Catalyzes the ATP-dependent amination of UTP to CTP with either L-glutamine or ammonia as the source of nitrogen. Regulates intracellular CTP levels through interactions with the four ribonucleotide triphosphates. The protein is CTP synthase of Bdellovibrio bacteriovorus (strain ATCC 15356 / DSM 50701 / NCIMB 9529 / HD100).